The sequence spans 242 residues: Phosphoribosylaminoimidazole-succinocarboxamide synthase (242 aa).

This sequence belongs to the SAICAR synthetase family.

It carries out the reaction 5-amino-1-(5-phospho-D-ribosyl)imidazole-4-carboxylate + L-aspartate + ATP = (2S)-2-[5-amino-1-(5-phospho-beta-D-ribosyl)imidazole-4-carboxamido]succinate + ADP + phosphate + 2 H(+). It functions in the pathway purine metabolism; IMP biosynthesis via de novo pathway; 5-amino-1-(5-phospho-D-ribosyl)imidazole-4-carboxamide from 5-amino-1-(5-phospho-D-ribosyl)imidazole-4-carboxylate: step 1/2. The sequence is that of Phosphoribosylaminoimidazole-succinocarboxamide synthase (purC) from Methanocaldococcus jannaschii (strain ATCC 43067 / DSM 2661 / JAL-1 / JCM 10045 / NBRC 100440) (Methanococcus jannaschii).